Consider the following 154-residue polypeptide: MGLSDGEWQLVLNVWGKVEADIPSHGQEVLIRLFKGHPETLEKFDKFKHLKSEDEMKASEDLKKHGATVLTALGGILKKKGHHEAEIKPLAQSHATKHKIPVKYLEFISECIIQVLQSKHPGDFGADAQGAMNKALELFRKDMASNYKELGFQG.

One can recognise a Globin domain in the interval glycine 2–lysine 148. Position 4 is a phosphoserine (serine 4). Histidine 65 is a binding site for nitrite. Histidine 65 provides a ligand contact to O2. Threonine 68 is modified (phosphothreonine). Histidine 94 is a heme b binding site.

The protein belongs to the globin family. As to quaternary structure, monomeric.

The protein resides in the cytoplasm. The protein localises to the sarcoplasm. It carries out the reaction Fe(III)-heme b-[protein] + nitric oxide + H2O = Fe(II)-heme b-[protein] + nitrite + 2 H(+). It catalyses the reaction H2O2 + AH2 = A + 2 H2O. Functionally, monomeric heme protein which primary function is to store oxygen and facilitate its diffusion within muscle tissues. Reversibly binds oxygen through a pentacoordinated heme iron and enables its timely and efficient release as needed during periods of heightened demand. Depending on the oxidative conditions of tissues and cells, and in addition to its ability to bind oxygen, it also has a nitrite reductase activity whereby it regulates the production of bioactive nitric oxide. Under stress conditions, like hypoxia and anoxia, it also protects cells against reactive oxygen species thanks to its pseudoperoxidase activity. This Hylobates agilis (Agile gibbon) protein is Myoglobin (MB).